Consider the following 144-residue polypeptide: Fluoride-specific ion channel FluC 1 (144 aa).

Helical transmembrane passes span Leu-11 to Gly-31, Leu-44 to Ile-64, Val-74 to Val-94, and Ile-107 to Tyr-127. Positions 84 and 87 each coordinate Na(+).

The protein belongs to the fluoride channel Fluc/FEX (TC 1.A.43) family.

Its subcellular location is the cell membrane. It catalyses the reaction fluoride(in) = fluoride(out). Its activity is regulated as follows. Na(+) is not transported, but it plays an essential structural role and its presence is essential for fluoride channel function. In terms of biological role, fluoride-specific ion channel. Important for reducing fluoride concentration in the cell, thus reducing its toxicity. This Bacillus cereus (strain ATCC 14579 / DSM 31 / CCUG 7414 / JCM 2152 / NBRC 15305 / NCIMB 9373 / NCTC 2599 / NRRL B-3711) protein is Fluoride-specific ion channel FluC 1.